Reading from the N-terminus, the 363-residue chain is RNA polymerase I-specific transcription initiation factor RRN5 (363 aa).

The segment at 301–344 (LSRRDAPPVHQDENQENQENQENQEQDNTASEGESEAERDEIDE) is disordered. The segment covering 302-313 (SRRDAPPVHQDE) has biased composition (basic and acidic residues). A compositionally biased stretch (low complexity) spans 317 to 328 (NQENQENQEQDN). Residues 333–344 (GESEAERDEIDE) show a composition bias toward acidic residues.

As to quaternary structure, component of the UAF (upstream activation factor) complex which consists of UAF30, RRN5, RRN9, RRN10, and histones H3 and H4.

It localises to the nucleus. The protein localises to the nucleolus. Its function is as follows. Component of the UAF (upstream activation factor) complex which interacts with the upstream element of the RNA polymerase I promoter and forms a stable preinitiation complex. Together with SPT15/TBP UAF seems to stimulate basal transcription to a fully activated level. This is RNA polymerase I-specific transcription initiation factor RRN5 (RRN5) from Saccharomyces cerevisiae (strain ATCC 204508 / S288c) (Baker's yeast).